A 650-amino-acid polypeptide reads, in one-letter code: Putative pumilio homolog 7, chloroplastic (650 aa).

2 disordered regions span residues 1–22 (MDEF…RTPL) and 200–235 (NDDK…GQEI). The transit peptide at 1–77 (MDEFREASSV…SPPFNGIIPK (77 aa)) directs the protein to the chloroplast. 2 stretches are compositionally biased toward low complexity: residues 8 to 22 (SSVS…RTPL) and 217 to 232 (PSYS…YNNG). The PUM-HD domain maps to 308–650 (SNTRALMSNN…RIFSRNLLKK (343 aa)). Pumilio repeat units follow at residues 333-368 (DIQG…IIFN), 369-404 (EVIA…QIVL), 408-443 (EEPG…SLVK), 445-480 (ALRP…FIFD), 481-516 (AATK…KLIA), 517-552 (EISR…MMLA), 553-591 (QLKG…ELVS), and 594-625 (HFDQ…SLVE).

It localises to the plastid. It is found in the chloroplast. The protein resides in the cytoplasm. Its function is as follows. Sequence-specific RNA-binding protein that regulates translation and mRNA stability by binding the 3'-UTR of target mRNAs. This is Putative pumilio homolog 7, chloroplastic (APUM7) from Arabidopsis thaliana (Mouse-ear cress).